Reading from the N-terminus, the 669-residue chain is MSALLSLCFVLPLAAPGHGTQGWEPCTDLRPLDILAEVVPSDGATSGIRIVQVHGARGLQLSVAAPRTMSFPASRIFSQCDLFPEEFSIVVTLRVPNLPPKRNEYLLTVVAEESDLLLLGLRLSPAQLHFLFLREDTAGAWQTRVSFRSPALVDGRWHTLVLAVSAGVFSLTTDCGLPVDIMADVPFPATLSVKGARFFVGSRRRAKGLFMGLVRQLVLLPGSDATPRLCPSRNAPLAVLSIPRVLQALTGKPEDNEVLKYPYETNIRVTLGPQPPCTEVEDAQFWFDASRKGLYLCVGNEWVSVLAAKERLDYVEEHQNLSTNSETLGIEVFRIPQVGLFVATANRKATSAVYKWTEEKFVSYQNIPTHQAQAWRHFTIGKKIFLAVANFEPDEKGQEFSVIYKWSHRKLKFTPYQSIATHSARDWEAFEVDGEHFLAVANHREGDNHNIDSVIYKWNPATRLFEANQTIATSGAYDWEFFSVGPYSFLVVANTFNGTSTKVHSHLYIRLLGSFQLFQSFPTFGAADWEVFQIGERIFLAVANSHSYDVEMQVQNDSYVINSVIYELNVTAQAFVKFQDILTCSALDWEFFSVGEDYFLVVANSFDGRTFSVNSIIYRWQGYEGFVAVHSLPTVGCRDWEAFSTTAGAYLIYSSAKEPLSRVLRLRTR.

The first 19 residues, M1–G19, serve as a signal peptide directing secretion. Residues G58–C277 enclose the Laminin G-like domain. 7 EAR repeats span residues D313 to E358, K360 to H408, K412 to P460, L464 to H506, S514 to V570, A574 to G622, and G625 to T668. N320 is a glycosylation site (N-linked (GlcNAc...) asparagine). N-linked (GlcNAc...) asparagine glycans are attached at residues N468, N497, N556, and N569.

It is found in the secreted. It localises to the cell surface. The protein resides in the cell projection. The protein localises to the stereocilium. Its function is as follows. Plays a critical role in tooth and hair follicle morphogenesis through regulation of the Notch signaling pathway. May play a role in development or function of the auditory system. In Homo sapiens (Human), this protein is Thrombospondin-type laminin G domain and EAR repeat-containing protein (TSPEAR).